Reading from the N-terminus, the 270-residue chain is Secreted RxLR effector protein 149 (270 aa).

A signal peptide spans 1-21 (MRNGVVLFGLFFIGYSSCVLA). Residues 43 to 58 (RTLQADDPERILAEER) carry the RxLR-dEER motif.

Belongs to the RxLR effector family.

The protein resides in the secreted. It is found in the host nucleus. The protein localises to the host cytoplasm. Functionally, secreted effector that completely suppresses the host cell death induced by cell death-inducing proteins. This chain is Secreted RxLR effector protein 149, found in Plasmopara viticola (Downy mildew of grapevine).